Consider the following 216-residue polypeptide: Transmembrane emp24 domain-containing protein eca (216 aa).

The signal sequence occupies residues 1–20; that stretch reads MRDQFISLALILCVLHSACG. The Lumenal segment spans residues 21-182; sequence LYFHISETER…FRHTSESTNS (162 aa). In terms of domain architecture, GOLD spans 30 to 126; it reads RKCFIEEVPD…QLRVHLDIQV (97 aa). Residues 134-164 are a coiled coil; the sequence is ANVAQKEKLTELQLRIRQLLDQVEQITKEQN. Residues 183-203 traverse the membrane as a helical segment; sequence RVLWWSLAQTIVLVCMGFWQM. At 204 to 216 the chain is on the cytoplasmic side; that stretch reads RHLKSFFEAKKLV. The Prevents secretion from ER motif lies at 213 to 216; that stretch reads KKLV.

It belongs to the EMP24/GP25L family.

The protein localises to the endoplasmic reticulum membrane. In terms of biological role, eca and bai are essential, though not redundant, for dorsoventral patterning of the embryo. Specifically required during early embryogenesis for the activity of maternal tkv, while the zygotic tkv is not affected. Involved in Golgi organization. The chain is Transmembrane emp24 domain-containing protein eca from Drosophila sechellia (Fruit fly).